Consider the following 964-residue polypeptide: Lon protease homolog, mitochondrial (964 aa).

The Lon N-terminal domain occupies Val89–Met300. Residue Gly455–Thr462 participates in ATP binding. A disordered region spans residues Gly663 to Gly740. Residues Val673–Thr687 show a composition bias toward polar residues. Basic and acidic residues predominate over residues Thr688–Ala698. A compositionally biased stretch (polar residues) spans Ser703–Ala712. A Lon proteolytic domain is found at His773–Ser957. Catalysis depends on residues Ser863 and Lys906.

The protein belongs to the peptidase S16 family. Homoheptamer. Organized in a ring with a central cavity.

It localises to the mitochondrion matrix. It catalyses the reaction Hydrolysis of proteins in presence of ATP.. Its function is as follows. ATP-dependent serine protease that mediates the selective degradation of misfolded, unassembled or oxidatively damaged polypeptides as well as certain short-lived regulatory proteins in the mitochondrial matrix. May also have a chaperone function in the assembly of inner membrane protein complexes. Participates in the regulation of mitochondrial gene expression and in the maintenance of the integrity of the mitochondrial genome. Binds to mitochondrial DNA in a site-specific manner. This Zea mays (Maize) protein is Lon protease homolog, mitochondrial (LON2).